Here is a 329-residue protein sequence, read N- to C-terminus: Alternative oxidase, mitochondrial (329 aa).

A helical membrane pass occupies residues 115 to 135 (VISRCLFLETVAGVPGMVGGM). The Fe cation site is built by Glu123, Glu162, and His165. Residues 181 to 201 (VSIIITQAIMYLFLLVAYVIS) form a helical membrane-spanning segment. Fe cation is bound by residues Glu213, Glu266, and His269. The tract at residues 300 to 329 (EMYSNQPSGKTRTDFGSEGAKTASNVNKHV) is disordered.

This sequence belongs to the alternative oxidase family. Homodimer; disulfide-linked. Requires Fe cation as cofactor.

The protein resides in the mitochondrion inner membrane. Catalyzes cyanide-resistant oxygen consumption. May increase respiration when the cytochrome respiratory pathway is restricted, or in response to low temperatures. In Trypanosoma brucei brucei, this protein is Alternative oxidase, mitochondrial (AOX).